A 382-amino-acid chain; its full sequence is N-acetylglucosamine-6-phosphate deacetylase (382 aa).

Glu-131 is an a divalent metal cation binding site. 142–143 (TH) lines the substrate pocket. The a divalent metal cation site is built by His-195 and His-216. Substrate contacts are provided by residues 219 to 220 (NA), Arg-227, and 248 to 251 (DGLH). The active-site Proton donor/acceptor is Asp-273. Position 306–308 (306–308 (LSG)) interacts with substrate.

It belongs to the metallo-dependent hydrolases superfamily. NagA family. In terms of assembly, homotetramer. A divalent metal cation serves as cofactor.

It carries out the reaction N-acetyl-D-glucosamine 6-phosphate + H2O = D-glucosamine 6-phosphate + acetate. It participates in amino-sugar metabolism; N-acetylneuraminate degradation; D-fructose 6-phosphate from N-acetylneuraminate: step 4/5. Functionally, involved in the first committed step in the biosynthesis of amino-sugar-nucleotides. Catalyzes the hydrolysis of the N-acetyl group of N-acetylglucosamine-6-phosphate (GlcNAc-6-P) to yield glucosamine 6-phosphate and acetate. Can probably also catalyze the deacetylation of N-acetyl-D-galactosamine 6-phosphate to D-galactosamine 6-phosphate. The protein is N-acetylglucosamine-6-phosphate deacetylase (nagA) of Escherichia coli O157:H7.